The primary structure comprises 103 residues: Protein S100-A16 (103 aa).

The EF-hand 1; degenerate domain maps to 12–47 (VIVLVENFYKYVSKYSLVKNKISKSSFREMLQKELN). An EF-hand 2 domain is found at 54-89 (GNRKAADKLIQNLDANHDGRISFDEYWTLIGGITGP). Ca(2+) is bound by residues aspartate 67, asparagine 69, aspartate 71, arginine 73, and glutamate 78.

It belongs to the S-100 family. Homodimer. Interacts with TP53. In terms of tissue distribution, ubiquitous. Highly expressed in esophagus, adipose tissues and colon. Expressed at lower level in lung, brain, pancreas and skeletal muscle. Expression is up-regulated in tumors of bladder, lung, thyroid gland, pancreas and ovary. Expressed in astrocytes.

It is found in the nucleus. The protein localises to the nucleolus. The protein resides in the cytoplasm. Functionally, calcium-binding protein. Binds one calcium ion per monomer. Can promote differentiation of adipocytes (in vitro). Overexpression in preadipocytes increases their proliferation, enhances adipogenesis and reduces insulin-stimulated glucose uptake. The sequence is that of Protein S100-A16 from Homo sapiens (Human).